We begin with the raw amino-acid sequence, 630 residues long: Chaperone protein HtpG (630 aa).

The interval 1–339 (MSHTETHAFQ…SNDLPLNVSR (339 aa)) is a; substrate-binding. Residues 340 to 556 (EILQSNRVVD…EGDISAHMAR (217 aa)) form a b region. The segment at 557–630 (MMEQMGQAMP…RMNALLSEVI (74 aa)) is c.

It belongs to the heat shock protein 90 family. As to quaternary structure, homodimer.

The protein resides in the cytoplasm. Molecular chaperone. Has ATPase activity. The protein is Chaperone protein HtpG of Hydrogenovibrio crunogenus (strain DSM 25203 / XCL-2) (Thiomicrospira crunogena).